The following is a 128-amino-acid chain: Protein Wnt-8 (128 aa).

S1 carries O-palmitoleoyl serine lipidation. 2 disulfide bridges follow: C71–C109 and C87–C102. 2 N-linked (GlcNAc...) asparagine glycosylation sites follow: N74 and N93.

The protein belongs to the Wnt family. In terms of processing, palmitoleoylation is required for efficient binding to frizzled receptors. Depalmitoleoylation leads to Wnt signaling pathway inhibition. Proteolytic processing by tiki1 and tiki2 promotes oxidation and formation of large disulfide-bond oligomers, leading to inactivation of wnt8.

It localises to the secreted. The protein resides in the extracellular space. The protein localises to the extracellular matrix. Ligand for members of the frizzled family of seven transmembrane receptors. Probable developmental protein. May be a signaling molecule which affects the development of discrete regions of tissues. Is likely to signal over only few cell diameters. The protein is Protein Wnt-8 (wnt8) of Thunnus thynnus (Atlantic bluefin tuna).